We begin with the raw amino-acid sequence, 298 residues long: tRNA-uridine aminocarboxypropyltransferase 2 (298 aa).

Met1 carries the post-translational modification N-acetylmethionine. Over residues 1 to 10 (MEPQAEERTL) the composition is skewed to basic and acidic residues. Positions 1-55 (MEPQAEERTLGEPAPPPSGALASPTPDEEERTEGGAPPTATPAGASGDSTSADGL) are disordered. Over residues 34 to 45 (GGAPPTATPAGA) the composition is skewed to low complexity. Ser132 carries the phosphoserine modification. Positions 178–181 (DGTW) match the DXTW motif.

It belongs to the TDD superfamily. DTWD2 family.

The protein localises to the nucleus. It localises to the cytoplasm. The enzyme catalyses a uridine in tRNA + S-adenosyl-L-methionine = a 3-[(3S)-3-amino-3-carboxypropyl]uridine in tRNA + S-methyl-5'-thioadenosine + H(+). Catalyzes the formation of 3-(3-amino-3-carboxypropyl)uridine (acp3U) at position 20a in the D-loop of several cytoplasmic tRNAs (acp3U(20a)). Also has a weak activity to form acp3U at position 20 in the D-loop of tRNAs (acp3U(20)). Involved in glycoRNA biosynthesis by mediating formation of acp3U, which acts as an attachment site for N-glycans on tRNAs. GlycoRNAs consist of RNAs modified with secretory N-glycans that are presented on the cell surface. This is tRNA-uridine aminocarboxypropyltransferase 2 from Mus musculus (Mouse).